The chain runs to 421 residues: Zinc finger protein Pegasus (421 aa).

The interval 35–55 (GDKEAETLQGAGTEGDQNGLD) is disordered. 3 consecutive C2H2-type zinc fingers follow at residues 82–104 (LKCR…IRIH), 110–132 (HRCH…MRSH), and 138–161 (YKCE…RRKH). Polar residues predominate over residues 229–238 (SMTKSSQTSG). Disordered stretches follow at residues 229–249 (SMTK…LMVD) and 292–358 (QPAT…PTLP). Positions 292–313 (QPATPAVVSSVSASIAQSSSPT) are enriched in low complexity. A compositionally biased stretch (polar residues) spans 339-351 (HTSTPSISNSQPS). 2 C2H2-type zinc fingers span residues 366-388 (HHCQ…MGCH) and 394-418 (FQCN…RGQH).

This sequence belongs to the Ikaros C2H2-type zinc-finger protein family. As to quaternary structure, probably self-associates.

Its subcellular location is the nucleus. Its function is as follows. Transcriptional repressor that binds the core 5'GNNTGTNG-3' DNA consensus sequence. The polypeptide is Zinc finger protein Pegasus (IKZF5) (Gallus gallus (Chicken)).